Reading from the N-terminus, the 2212-residue chain is Voltage-dependent P/Q-type calcium channel subunit alpha-1A (2212 aa).

Residues 1 to 100 lie on the Cytoplasmic side of the membrane; it reads MARFGDEMPG…KYAKKITEWP (100 aa). The I repeat unit spans residues 87 to 365; that stretch reads NVVRKYAKKI…LVLGVLSGEF (279 aa). A helical transmembrane segment spans residues 101–119; that stretch reads PFEYMILATIIANCIVLAL. The Extracellular segment spans residues 120–138; sequence EQHLPDDDKTPMSERLDDT. A helical membrane pass occupies residues 139-156; the sequence is EPYFIGIFCFEAGIKIVA. Over 157 to 168 the chain is Cytoplasmic; sequence LGFAFHKGSYLR. A helical transmembrane segment spans residues 169–184; it reads NGWNVMDFVVVLTGIL. The Extracellular segment spans residues 185–192; it reads ATVGTEFD. A helical transmembrane segment spans residues 193–211; that stretch reads LRTLRAVRVLRPLKLVSGI. The Cytoplasmic segment spans residues 212–230; it reads PSLQVVLKSIMKAMIPLLQ. Residues 231 to 250 traverse the membrane as a helical segment; sequence IGLLLFFAILIFAIIGLEFY. Topologically, residues 251-337 are extracellular; that stretch reads MGKFHTTCFE…NSNDASGNTW (87 aa). N-linked (GlcNAc...) asparagine glycosylation is present at N285. E320 is a binding site for Ca(2+). The helical transmembrane segment at 338–362 threads the bilayer; that stretch reads NWLYFIPLIIIGSFFMLNLVLGVLS. Topologically, residues 363-489 are cytoplasmic; that stretch reads GEFAKERERV…FYIRRMVKTQ (127 aa). Positions 385–402 are binding to the beta subunit; that stretch reads QQIERELNGYMEWISKAE. T411 bears the Phosphothreonine mark. 2 positions are modified to phosphoserine: S450 and S453. Residues 475 to 719 form an II repeat; it reads ERRMRFYIRR…VFLAIAVDNL (245 aa). A helical transmembrane segment spans residues 490–509; it reads AFYWTVLSLVALNTLWLAIV. The Extracellular segment spans residues 510–523; it reads HYNQPEWLSDFLYY. The helical transmembrane segment at 524-543 threads the bilayer; it reads AEFIFLGLFMSEMFIKMYGL. Residues 544 to 551 are Cytoplasmic-facing; sequence GTRPYFHS. A helical transmembrane segment spans residues 552 to 570; the sequence is SFNCFDCGVIIGSIFEVIW. The Extracellular segment spans residues 571-580; it reads AVIKPGTSFG. Residues 581–599 form a helical membrane-spanning segment; the sequence is ISVLRALRLLRIFKVTKYW. Over 600 to 618 the chain is Cytoplasmic; the sequence is ASLRNLVVSLLNSMKSIIS. A helical transmembrane segment spans residues 619 to 638; the sequence is LLFLLFLFIVVFALLGMQLF. Residues 639–691 lie on the Extracellular side of the membrane; it reads GGQFNFDEGTPPTNFDTFPAAIMTVFQILTGEDWNEVMYDEIKSQGGVQGGMV. E670 is a Ca(2+) binding site. The chain crosses the membrane as a helical span at residues 692–716; sequence FSIYFIVLTLFGNYTLLNVFLAIAV. The Cytoplasmic segment spans residues 717-1190; the sequence is DNLANAQELT…TNPLRRLCHY (474 aa). A phosphoserine mark is found at S752, S755, and S792. Composition is skewed to basic and acidic residues over residues 814-824, 850-862, 871-924, and 932-958; these read PDVKTHLDRPL, RPRE…DARR, APGR…EGEP, and RPGD…RAAD. 2 disordered regions span residues 814–1117 and 1137–1170; these read PDVK…RKPE and VNKN…KPMP. 3 positions are modified to phosphoserine: S1038, S1042, and S1051. The span at 1056 to 1073 shows a compositional bias: polar residues; sequence GNSTNPGPALATNPQNAA. Low complexity predominate over residues 1074–1083; the sequence is SRRTPNNPGN. Positions 1094–1111 are enriched in polar residues; sequence ENSLIVTNPSSTQPNSAK. Residues 1153–1163 show a composition bias toward acidic residues; sequence KKEEEEADPGE. Residues 1182–1465 form an III repeat; that stretch reads NPLRRLCHYI…IFVALIIITF (284 aa). Residues 1191-1214 form a helical membrane-spanning segment; sequence ILNLRYFEMCILMVIAMSSIALAA. Topologically, residues 1215–1231 are extracellular; it reads EDPVQPNAPRNNVLRYF. The chain crosses the membrane as a helical span at residues 1232-1251; sequence DYVFTGVFTFEMVIKMIDLG. Topologically, residues 1252–1258 are cytoplasmic; that stretch reads LVLHQGA. The helical transmembrane segment at 1259–1282 threads the bilayer; the sequence is YFRDLWNILDFIVVSGALVAFAFT. Residues 1283-1293 lie on the Extracellular side of the membrane; that stretch reads GNSKGKDINTI. Residues 1294–1311 form a helical membrane-spanning segment; it reads KSLRVLRVLRPLKTIKRL. Residues 1312–1330 lie on the Cytoplasmic side of the membrane; it reads PKLKAVFDCVVNSLKNVFN. A helical transmembrane segment spans residues 1331 to 1350; it reads ILIVYMLFMFIFAVVAVQLF. Residues 1351–1437 lie on the Extracellular side of the membrane; it reads KGKFFHCTDE…QGPSPGYRME (87 aa). Residue E1411 coordinates Ca(2+). The chain crosses the membrane as a helical span at residues 1438-1462; the sequence is MSIFYVVYFVVFPFFFVNIFVALII. Topologically, residues 1463 to 1518 are cytoplasmic; it reads ITFQEQGDKMMEEYSLEKNERACIDFAISAKPLTRHMPQNKQSFQYRMWQFVVSPP. One copy of the IV repeat lies at 1502–1765; that stretch reads NKQSFQYRMW…LFVAVIMDNF (264 aa). The chain crosses the membrane as a helical span at residues 1519-1537; the sequence is FEYTIMAMIALNTIVLMMK. The Extracellular segment spans residues 1538 to 1551; sequence FYGASVAYENALRV. A helical membrane pass occupies residues 1552-1573; sequence FNIVFTSLFSLECVLKVMAFGI. Topologically, residues 1574–1580 are cytoplasmic; it reads LNYFRDA. A helical transmembrane segment spans residues 1581 to 1600; sequence WNIFDFVTVLGSITDILVTE. Residues 1601–1607 lie on the Extracellular side of the membrane; sequence FGNNFIN. Residue N1607 is glycosylated (N-linked (GlcNAc...) asparagine). Residues 1608 to 1626 form a helical membrane-spanning segment; that stretch reads LSFLRLFRAARLIKLLRQG. Residues 1627–1645 lie on the Cytoplasmic side of the membrane; that stretch reads YTIRILLWTFVQSFKALPY. The helical transmembrane segment at 1646–1665 threads the bilayer; that stretch reads VCLLIAMLFFIYAIIGMQVF. The Extracellular portion of the chain corresponds to 1666-1737; the sequence is GNIGIDGEDE…IQKPECGNEF (72 aa). Residues 1738 to 1763 traverse the membrane as a helical segment; sequence AYFYFVSFIFLCSFLMLNLFVAVIMD. The Cytoplasmic portion of the chain corresponds to 1764–2212; the sequence is NFEYLTRDSS…EGREHATHRQ (449 aa). Phosphothreonine is present on T1935. Residues 1940–2212 form a disordered region; it reads QRMEPPSPTQ…EGREHATHRQ (273 aa). Composition is skewed to polar residues over residues 1948–1963 and 1972–1997; these read TQEG…STQL and QESS…TGTW. Phosphoserine is present on residues S1998, S2016, S2028, S2030, S2071, and S2091. Polar residues predominate over residues 2008–2017; sequence PNSQPNSQSV. A compositionally biased stretch (basic and acidic residues) spans 2018 to 2034; it reads EMREMGTDGYSDSEHYL. Residues 2064 to 2073 show a composition bias toward polar residues; it reads LSTISDTSPM. Basic and acidic residues-rich tracts occupy residues 2085–2102 and 2143–2153; these read RRLD…ENQR and PSKDRDQDRGR. Over residues 2154–2172 the composition is skewed to basic residues; it reads PKDRKHRPHHHHHHHHHHP. Basic and acidic residues predominate over residues 2173-2212; the sequence is PAPDRERYAQERPDTGRARAREQRWSRSPSEGREHATHRQ.

Belongs to the calcium channel alpha-1 subunit (TC 1.A.1.11) family. CACNA1A subfamily. In terms of assembly, voltage-dependent calcium channels are multisubunit complexes, consisting of alpha-1, alpha-2, beta and delta subunits in a 1:1:1:1 ratio. The channel activity is directed by the pore-forming and voltage-sensitive alpha-1 subunit. In many cases, this subunit is sufficient to generate voltage-sensitive calcium channel activity. The auxiliary subunits beta and alpha-2/delta linked by a disulfide bridge regulate the channel activity. Interacts (via C-terminal CDB motif) with CABP1 in the pre- and postsynaptic membranes. Interacts with the spider omega-agatoxin-IVA (AC P30288). Interacts with TSPOAP1. As to expression, brain specific. Purkinje cells contain predominantly P-type VSCC, the Q-type being a prominent calcium current in cerebellar granule cells. Also found in heart, in kidney distal convoluted tubule (DCT), and in pituitary.

The protein localises to the cell membrane. It carries out the reaction Ca(2+)(in) = Ca(2+)(out). Its function is as follows. Voltage-sensitive calcium channels (VSCC) mediate the entry of calcium ions into excitable cells and are also involved in a variety of calcium-dependent processes, including muscle contraction, hormone or neurotransmitter release, gene expression, cell motility, cell division and cell death. The isoform alpha-1A gives rise to P and/or Q-type calcium currents. P/Q-type calcium channels belong to the 'high-voltage activated' (HVA) group and are specifically blocked by the spider omega-agatoxin-IVA (AC P30288). They are however insensitive to dihydropyridines (DHP). The chain is Voltage-dependent P/Q-type calcium channel subunit alpha-1A from Rattus norvegicus (Rat).